The following is a 356-amino-acid chain: SERTA domain-containing protein 4 (356 aa).

A disordered region spans residues 33 to 53 (SYGGPSPPGPAQAPLQGDRGA). An SERTA domain is found at 101-147 (IFEERAHILYMSLEKLKFIDDPEVYLRRSVLINNLMKRIHGEIIMQN). The segment covering 215-232 (TAASSPSASSSSSSSSSS) has biased composition (low complexity). Disordered regions lie at residues 215–238 (TAAS…LPLP), 280–302 (KLND…HEPV), and 332–356 (WKKS…GSKI). Residues 280–292 (KLNDEKANDDTNR) show a composition bias toward basic and acidic residues.

The chain is SERTA domain-containing protein 4 (SERTAD4) from Homo sapiens (Human).